The sequence spans 1068 residues: Leucine zipper protein 1 (1068 aa).

A2 bears the N-acetylalanine mark. Residues A11–L354 are a coiled coil. 3 disordered regions span residues L251–L292, T375–R402, and A432–E558. The segment covering K254 to L292 has biased composition (basic and acidic residues). A phosphoserine mark is found at S256, S261, S395, S513, S571, S575, S612, and S660. A compositionally biased stretch (polar residues) spans R510 to S519. The tract at residues T677–G700 is disordered. T680 is subject to Phosphothreonine. Phosphoserine is present on residues S691 and S746. A disordered region spans residues Q782 to P829. Residues T785–S796 show a composition bias toward low complexity. Residues A834–P884 form a required for interaction with FLNA region. A Phosphoserine modification is found at S906. The interval R924–A945 is disordered. T952 carries the post-translational modification Phosphothreonine. Disordered stretches follow at residues Q959–V995 and N1033–D1068. A compositionally biased stretch (polar residues) spans R984–E994. A Phosphoserine modification is found at S988.

In terms of assembly, component of the CERF-1 ISWI chromatin remodeling complex (also called the CECR2-containing remodeling factor (CERF) complex) at least composed of CECR2 and SMARCA1. Component of the CERF-5 ISWI chromatin remodeling complex at least composed of CECR2 and SMARCA5/SNF2H. LUZP1 is detected as part of the CERF-1 and CERF-5 complexes in embryonic stem (ES) cells where it is involved in complex stabilization but is not detected in the complexes in the testis. Interacts (via C-terminus) with LIMA1/EPLIN; both proteins restrict ciliation and may work together to regulate this process. Interacts with myosin light chain MYL9; the interaction results in inhibition of phosphorylation of MYL9 by DAPK3. Interacts with DAPK3; the interaction is likely to occur throughout the cell cycle and reduces the LUZP1-mediated suppression of MYL9 phosphorylation. Interacts with the chromosomal passenger complex (CPC); CPC kinase activity is required for localization of LUZP1 to the centromere. Predominantly expressed in the brain (at protein level).

The protein resides in the cytoplasm. Its subcellular location is the cytoskeleton. It is found in the microtubule organizing center. It localises to the centrosome. The protein localises to the cilium basal body. The protein resides in the midbody. Its subcellular location is the chromosome. It is found in the centromere. It localises to the spindle. The protein localises to the stress fiber. The protein resides in the nucleus. Its subcellular location is the cell projection. It is found in the dendrite. It localises to the perikaryon. The protein localises to the cell junction. The protein resides in the tight junction. F-actin cross-linking protein. Stabilizes actin and acts as a negative regulator of primary cilium formation. Positively regulates the phosphorylation of both myosin II and protein phosphatase 1 regulatory subunit PPP1R12A/MYPT1 and promotes the assembly of myosin II stacks within actin stress fibers. Inhibits the phosphorylation of myosin light chain MYL9 by DAPK3 and suppresses the constriction velocity of the contractile ring during cytokinesis. Binds to microtubules and promotes epithelial cell apical constriction by up-regulating levels of diphosphorylated myosin light chain (MLC) through microtubule-dependent inhibition of MLC dephosphorylation by myosin phosphatase. Involved in regulation of cell migration, nuclear size and centriole number, probably through regulation of the actin cytoskeleton. Component of the CERF-1 and CERF-5 chromatin remodeling complexes in embryonic stem cells where it acts to stabilize the complexes. Plays a role in embryonic brain and cardiovascular development. The chain is Leucine zipper protein 1 (Luzp1) from Mus musculus (Mouse).